Consider the following 1582-residue polypeptide: Adhesion G protein-coupled receptor B1 (1582 aa).

Residues 1–33 form the signal peptide; that stretch reads MRGQAAAPGPIWILAPLLLLLLLLGRWARAASG. At 34-948 the chain is on the extracellular side; the sequence is ADIGPGTEQC…ATMDKVTVPS (915 aa). Asn-64 is a glycosylation site (N-linked (GlcNAc...) asparagine). A TSP type-1 1 domain is found at 261–315; sequence AGGWKLWSLWGECTRDCGGGLQTRTRTCLPTLGVEGGGCEGVLEEGRLCNRKACG. Intrachain disulfides connect Cys-273–Cys-309, Cys-277–Cys-314, and Cys-288–Cys-299. The interval 313 to 335 is disordered; sequence ACGPTGRSSSRSQSLRSTDARRR. Over residues 319-329 the composition is skewed to low complexity; the sequence is RSSSRSQSLRS. TSP type-1 domains lie at 354–407, 409–462, 467–520, and 522–575; these read DPAA…AVCP, HGAW…ALCP, DGNW…QQCP, and DGKW…QRCP. Intrachain disulfides connect Cys-366–Cys-400, Cys-370–Cys-406, Cys-381–Cys-390, Cys-421–Cys-456, Cys-425–Cys-461, Cys-436–Cys-446, Cys-479–Cys-514, Cys-483–Cys-519, Cys-494–Cys-504, Cys-534–Cys-569, Cys-538–Cys-574, Cys-549–Cys-559, Cys-581–Cys-616, and Cys-604–Cys-634. Asn-401 carries an N-linked (GlcNAc...) asparagine glycan. N-linked (GlcNAc...) asparagine glycosylation is present at Asn-607. A Phosphothreonine modification is found at Thr-609. 4 N-linked (GlcNAc...) asparagine glycosylation sites follow: Asn-692, Asn-844, Asn-877, and Asn-881. The GAIN-B domain occupies 760 to 939; it reads RDAYQVTDNL…AILAQLSADA (180 aa). 2 disulfide bridges follow: Cys-884–Cys-921 and Cys-909–Cys-923. Residues 884 to 939 are GPS; that stretch reads CILWDETDGPSSSAPPQLGPWSWRGCRTVPLDALRTRCLCDRLSTFAILAQLSADA. Residues 927–943 form an N-terminal stalk following vasculostatin-120 cleavage which is not required for signaling activity region; it reads STFAILAQLSADATMDK. Residues 949–969 traverse the membrane as a helical segment; sequence VTLIVGCGVSSLTLLMLVIIY. At 970 to 980 the chain is on the cytoplasmic side; that stretch reads VSVWRYIRSER. A helical membrane pass occupies residues 981–1001; it reads SVILINFCLSIISSNALILIG. Topologically, residues 1002–1008 are extracellular; sequence QTQTRNK. Residues 1009–1029 traverse the membrane as a helical segment; sequence VVCTLVAAFLHFFFLSSFCWV. Residues 1030-1052 are Cytoplasmic-facing; sequence LTEAWQSYMAVTGRLRSRLVRKR. A helical membrane pass occupies residues 1053 to 1073; sequence FLCLGWGLPALVVAISVGFTK. The Extracellular segment spans residues 1074-1093; the sequence is AKGYSTMNYCWLSLEGGLLY. The helical transmembrane segment at 1094-1114 threads the bilayer; it reads AFVGPAAAVVLVNMVIGILVF. At 1115–1136 the chain is on the cytoplasmic side; it reads NKLVSKDGITDKKLKERAGASL. A helical transmembrane segment spans residues 1137-1157; sequence WSSCVVLPLLALTWMSAVLAV. Topologically, residues 1158 to 1166 are extracellular; sequence TDRRSALFQ. Residues 1167 to 1187 form a helical membrane-spanning segment; it reads ILFAVFDSLEGFVIVMVHCIL. Over 1188–1582 the chain is Cytoplasmic; it reads RREVQDAVKC…QDIIDLQTEV (395 aa). The segment at 1363-1582 is involved in interaction with MAGI1; it reads YSINIDQMPQ…QDIIDLQTEV (220 aa). A disordered region spans residues 1382-1549; sequence PDASFPTRSP…AWVKKELEPL (168 aa). Residues 1389–1435 are compositionally biased toward pro residues; the sequence is RSPPAREPPGGAPPEVPPVQPPPPPPPPPPPPQQPIPPPPTLEPAPP. The span at 1441-1455 shows a compositional bias: low complexity; it reads GEPAAHPGPSSGAGA. Ser-1467 carries the post-translational modification Phosphoserine. Basic and acidic residues-rich tracts occupy residues 1468–1484 and 1491–1520; these read LERR…EKIM and QDMF…KPEK. An indispensable for interaction with MAGI1 region spans residues 1579 to 1582; the sequence is QTEV.

Belongs to the G-protein coupled receptor 2 family. LN-TM7 subfamily. In terms of assembly, interacts with ELMO1 and DOCK1. When bound to ELMO1 and DOCK1, acts as a module to promote apoptotic cell engulfment. Interacts with MDM2; the interaction results in inhibition of MDM2-mediated ubiquitination and degradation of DLG4/PSD95. Interacts with PARD3 and TIAM1; the interaction is required for correct dendritic localization of PARD3 and TIAM1 and for dendritic spine formation. Interacts with MAGI1, MAGI3 and BAIAP2. Interacts with PHYHIP. Interacts with DLG4 (via PDZ domain). Vasculostatin-120: Interacts with CD36. Vasculostatin-120: Interacts with ARRB2. Interacts with BAIAP3; this interaction is direct. Proteolytically cleaved to produce vasculostatin-40 and vasculostatin-120. Vasculostatin-40 is the major form and is produced through proteolytic cleavage by MMP14 between residues 321 and 329 with cleavage likely to be between Ser-326 and Leu-327. Post-translationally, ubiquitinated. In brain, widespread expression in all neuropil-rich zones including spinal cord gray matter, cerebellar molecular layer, cerebral cortex, thalamic nuclei and basal ganglia with no expression in white matter (at protein level). In the cerebellar molecular layer, highly expressed in interneuron processes whereas Purkinje cells and their dendrites show weaker expression (at protein level). In the olfactory bulb, highly expressed in glomeruli (at protein level). In the retina, highly concentrated in the outer and inner plexiform layers (at protein level). Expressed in brain. Enriched in hippocampus and cortex. Also detected in other tissues including bone marrow and spleen.

Its subcellular location is the cell membrane. It localises to the cell projection. The protein resides in the phagocytic cup. It is found in the cell junction. The protein localises to the focal adhesion. Its subcellular location is the dendritic spine. It localises to the postsynaptic density. The protein resides in the secreted. Phosphatidylserine receptor which enhances the engulfment of apoptotic cells. Also mediates the binding and engulfment of Gram-negative bacteria. Stimulates production of reactive oxygen species by macrophages in response to Gram-negative bacteria, resulting in enhanced microbicidal macrophage activity. In the gastric mucosa, required for recognition and engulfment of apoptotic gastric epithelial cells. Promotes myoblast fusion. Activates the Rho pathway in a G-protein-dependent manner. Inhibits MDM2-mediated ubiquitination and degradation of DLG4/PSD95, promoting DLG4 stability and regulating synaptic plasticity. Required for the formation of dendritic spines by ensuring the correct localization of PARD3 and TIAM1. Potent inhibitor of angiogenesis in brain and may play a significant role as a mediator of the p53/TP53 signal in suppression of glioblastoma. Functionally, inhibits angiogenesis in a CD36-dependent manner. Its function is as follows. Inhibits angiogenesis. In Mus musculus (Mouse), this protein is Adhesion G protein-coupled receptor B1.